The chain runs to 400 residues: Laminin subunit B (400 aa).

Laminin EGF-like domains lie at 1-5 (EGCKP), 6-53 (CECD…GCKS), and 54-100 (CTCN…QCIP). Cystine bridges form between Cys-6/Cys-18, Cys-8/Cys-25, Cys-27/Cys-36, Cys-39/Cys-51, Cys-54/Cys-66, Cys-56/Cys-73, Cys-75/Cys-84, and Cys-87/Cys-98. The interval 101–400 (CGECFDNWDK…AEAKNNAHEA (300 aa)) is domain II and I. The stretch at 140–235 (KEFEELEQVL…RENALEIQEQ (96 aa)) forms a coiled coil. N-linked (GlcNAc...) asparagine glycans are attached at residues Asn-160, Asn-175, Asn-216, Asn-266, Asn-283, Asn-310, and Asn-356. Residues 353-400 (EAKNTSRKAEELIKSKYRSTSSTLSELENSNKQCKQATAEAKNNAHEA) adopt a coiled-coil conformation. Residues 369–400 (YRSTSSTLSELENSNKQCKQATAEAKNNAHEA) are disordered. The span at 371 to 383 (STSSTLSELENSN) shows a compositional bias: low complexity.

As to quaternary structure, laminin is a complex glycoprotein, consisting of three different polypeptide chains (alpha, beta, gamma), which are bound to each other by disulfide bonds into a cross-shaped molecule comprising one long and three short arms with globules at each end. In terms of tissue distribution, individual glial and muscle cells.

The protein localises to the secreted. It localises to the extracellular space. Its subcellular location is the extracellular matrix. Functionally, binding to cells via a high affinity receptor, laminin is thought to mediate the attachment, migration and organization of cells into tissues during embryonic development by interacting with other extracellular matrix components. In Hirudo medicinalis (Medicinal leech), this protein is Laminin subunit B.